The chain runs to 261 residues: Antiviral protein S (261 aa).

2 disulfide bridges follow: C34–C258 and C84–C105. The active site involves E175.

This sequence belongs to the ribosome-inactivating protein family. Type 1 RIP subfamily.

It catalyses the reaction Endohydrolysis of the N-glycosidic bond at one specific adenosine on the 28S rRNA.. Its function is as follows. Inhibits viral infection of plants, and protein synthesis in vitro. This chain is Antiviral protein S, found in Phytolacca americana (American pokeweed).